The following is a 229-amino-acid chain: 7-cyano-7-deazaguanine synthase (229 aa).

9–19 (YSGGLDSTTCM) provides a ligand contact to ATP. Zn(2+)-binding residues include Cys189, Cys199, Cys202, and Cys205.

The protein belongs to the QueC family. Zn(2+) is required as a cofactor.

The catalysed reaction is 7-carboxy-7-deazaguanine + NH4(+) + ATP = 7-cyano-7-deazaguanine + ADP + phosphate + H2O + H(+). The protein operates within purine metabolism; 7-cyano-7-deazaguanine biosynthesis. Its function is as follows. Catalyzes the ATP-dependent conversion of 7-carboxy-7-deazaguanine (CDG) to 7-cyano-7-deazaguanine (preQ(0)). The protein is 7-cyano-7-deazaguanine synthase of Geotalea daltonii (strain DSM 22248 / JCM 15807 / FRC-32) (Geobacter daltonii).